The primary structure comprises 264 residues: 2',3'-cyclic-nucleotide 2'-phosphodiesterase (264 aa).

Fe cation-binding residues include D8, E39, N40, and N67. H68 functions as the Proton donor in the catalytic mechanism. The Fe cation site is built by H150, H175, and H177.

Belongs to the YmdB-like family. In terms of assembly, homodimer. The cofactor is Fe(2+). It depends on Fe(3+) as a cofactor.

The protein localises to the cytoplasm. It carries out the reaction a nucleoside 2',3'-cyclic phosphate + H2O = a nucleoside 3'-phosphate + H(+). In terms of biological role, plays a central, regulatory role in the late adaptive responses and affects the levels of many genes. May act via regulation of cAMP levels. Decreases the expression of motility genes and induces genes involved in biofilm formation, by controlling the expression of SlrR. Required for formation of intercellular nanotubes that bridge neighboring cells to allow molecular exchange. Plays a key role in directing the early stages of colony development. In vitro, has a metal-dependent phosphodiesterase activity against 2',3'-cAMP and 2',3'-cGMP. Also has 3',5'-cyclic-nucleotide phosphodiesterase activity, but cannot use cyclic di-AMP or cyclic di-GMP, and does not have phosphatase activity. The chain is 2',3'-cyclic-nucleotide 2'-phosphodiesterase (ymdB) from Bacillus subtilis (strain 168).